The chain runs to 134 residues: Retinol-binding protein 2 (134 aa).

All-trans-retinol contacts are provided by Lys41 and Gln109.

It belongs to the calycin superfamily. Fatty-acid binding protein (FABP) family.

Its subcellular location is the cytoplasm. Intracellular transport of retinol. This Rattus norvegicus (Rat) protein is Retinol-binding protein 2 (Rbp2).